Consider the following 408-residue polypeptide: Bifunctional polynucleotide phosphatase/kinase (408 aa).

Residues 1-38 (MSSKKRKSPPQESLTSYFEKSSKSSKKYGSQNKDSDSS) form a disordered region. Serine 8 bears the Phosphoserine mark. Composition is skewed to polar residues over residues 10–19 (PQESLTSYFE) and 28–38 (YGSQNKDSDSS). 263–270 (GFPSSGKS) is a binding site for ATP.

It in the N-terminal section; belongs to the DNA 3' phosphatase family.

The protein localises to the nucleus. The enzyme catalyses a 3'end (2'-deoxyribonucleotide 3'-phosphate)-DNA + H2O = a 3'-end 2'-deoxyribonucleotide-DNA + phosphate. The catalysed reaction is a 5'-end dephospho-2'-deoxyribonucleoside-DNA + ATP = a 5'-end 5'-phospho-2'-deoxyribonucleoside-DNA + ADP + H(+). Its function is as follows. Catalyzes the phosphorylation of DNA at 5'-hydroxyl termini and can dephosphorylate its 3'-phosphate termini. Has a role in the repair of breaks in single-stranded DNA. The polypeptide is Bifunctional polynucleotide phosphatase/kinase (pnk1) (Schizosaccharomyces pombe (strain 972 / ATCC 24843) (Fission yeast)).